Consider the following 461-residue polypeptide: Protein-serine O-palmitoleoyltransferase porcupine (461 aa).

Over 1–17 the chain is Cytoplasmic; sequence MATFSRQEFFQQLLQGC. Residues 18–38 form a helical membrane-spanning segment; the sequence is LLPTVQQGLDQIWLLLTICFA. Over 39 to 66 the chain is Extracellular; the sequence is CRLLWRLGLPSYLKHASTVAGGFFSLYH. The chain crosses the membrane as a helical span at residues 67–87; the sequence is FFQLHMVWVVLLSLLCYLVLF. At 88-95 the chain is on the cytoplasmic side; it reads LCRHSSHR. The helical transmembrane segment at 96 to 116 threads the bilayer; that stretch reads GVFLSVTILIYLLMGEMHMVD. Residues 117–152 are Extracellular-facing; the sequence is TVTWHKMRGAQMIVAMKAVSLGFDLDRGEVGAVPSP. A helical membrane pass occupies residues 153–173; sequence VEFMGYLYFVGTIVFGPWISF. Over 174–198 the chain is Cytoplasmic; that stretch reads HSYLQAVQGRPLSRRWLKKVARSLA. A helical membrane pass occupies residues 199–219; it reads LALLCLVLSTCVGPYLFPYFI. Residues 220–252 lie on the Extracellular side of the membrane; sequence PLDGDRLLRNKKRKARGTMVRWLRAYESAVSFH. Residues 253 to 273 traverse the membrane as a helical segment; it reads FSNYFVGFLSEATATLAGAGF. The Cytoplasmic segment spans residues 274–337; it reads TEEKDHLEWD…SAVLVTYAAS (64 aa). The helical transmembrane segment at 338–358 threads the bilayer; it reads ALLHGFSFHLAAVLLSLAFIT. Residue histidine 341 is part of the active site. At 359–396 the chain is on the extracellular side; the sequence is YVEHVLRKRLAQILSACILSKRCLPDCSHRHRLGLGVR. Residues 397-417 form a helical membrane-spanning segment; it reads ALNLLFGALAIFHLSYLGSLF. The Cytoplasmic portion of the chain corresponds to 418–461; it reads DVDVDDTTEEQGYGMAYTVHKWSELSWASHWVTFGCWIFYRLIG.

Belongs to the membrane-bound acyltransferase family. Porcupine subfamily. As to quaternary structure, interacts with WNT1, WNT3, WNT3A, WNT4, WNT5A, WNT5B, WNT6, WNT7A and WNT7B. As to expression, expressed in brain, heart, kidney, liver, lung, muscle, spleen and testis. Isoform 4 is strongly expressed in kidney, liver, lung, spleen and testis. Isoform 1 is strongly expressed in brain, heart and muscle and poorly in kidney, liver, lung, spleen and testis.

It is found in the endoplasmic reticulum membrane. It carries out the reaction [Wnt protein]-L-serine + (9Z)-hexadecenoyl-CoA = [Wnt protein]-O-(9Z)-hexadecenoyl-L-serine + CoA. In terms of biological role, protein-serine O-palmitoleoyltransferase that acts as a key regulator of the Wnt signaling pathway by mediating the attachment of palmitoleate, a 16-carbon monounsaturated fatty acid (C16:1(9Z)), to Wnt proteins. Serine palmitoleoylation of WNT proteins is required for efficient binding to frizzled receptors. The chain is Protein-serine O-palmitoleoyltransferase porcupine from Mus musculus (Mouse).